The following is a 475-amino-acid chain: Ribulose bisphosphate carboxylase large chain (475 aa).

Positions 1 to 2 are excised as a propeptide; it reads MS. At proline 3 the chain carries N-acetylproline. N6,N6,N6-trimethyllysine is present on lysine 14. Positions 123 and 173 each coordinate substrate. Lysine 175 functions as the Proton acceptor in the catalytic mechanism. Substrate is bound at residue lysine 177. The Mg(2+) site is built by lysine 201, aspartate 203, and glutamate 204. Lysine 201 carries the post-translational modification N6-carboxylysine. Catalysis depends on histidine 294, which acts as the Proton acceptor. Substrate-binding residues include arginine 295, histidine 327, and serine 379.

This sequence belongs to the RuBisCO large chain family. Type I subfamily. Heterohexadecamer of 8 large chains and 8 small chains; disulfide-linked. The disulfide link is formed within the large subunit homodimers. The cofactor is Mg(2+). The disulfide bond which can form in the large chain dimeric partners within the hexadecamer appears to be associated with oxidative stress and protein turnover.

Its subcellular location is the plastid. It is found in the chloroplast. The catalysed reaction is 2 (2R)-3-phosphoglycerate + 2 H(+) = D-ribulose 1,5-bisphosphate + CO2 + H2O. The enzyme catalyses D-ribulose 1,5-bisphosphate + O2 = 2-phosphoglycolate + (2R)-3-phosphoglycerate + 2 H(+). In terms of biological role, ruBisCO catalyzes two reactions: the carboxylation of D-ribulose 1,5-bisphosphate, the primary event in carbon dioxide fixation, as well as the oxidative fragmentation of the pentose substrate in the photorespiration process. Both reactions occur simultaneously and in competition at the same active site. The polypeptide is Ribulose bisphosphate carboxylase large chain (Vitis vinifera (Grape)).